The chain runs to 251 residues: Capsid protein (251 aa).

Residues 3-20 (KRDAPWRLTAGTAKISRT) carry the Bipartite nuclear localization signal motif. The short motif at 35-49 (RASAWVNRPMYRKPR) is the Nuclear localization signal element. A zinc finger spans residues 63–80 (CEGPCKVQSFEQRHDVSH). Residues 96–117 (ITHRVGKRFCVKSVYILGKIWM) carry the Nuclear export signal motif. The short motif at 195 to 242 (RRFWKVNNHVVYNHQEAGKYENHTENALLLYMACTHASNPVYATLKIR) is the Bipartite nuclear localization signal element.

Belongs to the geminiviridae capsid protein family. Homomultimer. Binds to single-stranded and double-stranded viral DNA. Interacts (via nuclear localization signals) with host importin alpha-1a.

The protein resides in the virion. It localises to the host nucleus. In terms of biological role, encapsidates the viral DNA into characteristic twinned ('geminate') particles. Binds the genomic viral ssDNA and shuttles it into and out of the cell nucleus. The CP of bipartite geminiviruses is not required for cell-to-cell or systemic movement. In Capsicum annuum (Capsicum pepper), this protein is Capsid protein.